Consider the following 166-residue polypeptide: Holin-like protein TcdE (166 aa).

Transmembrane regions (helical) follow at residues 15–35 (IFFY…LSEH), 36–56 (IFIK…CLSA), 77–97 (MIAC…NFLF), and 111–131 (HLGI…VSIL).

It belongs to the bacteriophage holin family. As to quaternary structure, homomultimer.

It localises to the cell membrane. In terms of biological role, holin-like protein required for secretion of toxins A and B (TcdA and TcdB). Facilitates the release of toxins to the extracellular environment without causing the bacterial cell lysis. Has weak activity, suggesting that it may act as a antiholin when multiple forms are produced. This chain is Holin-like protein TcdE, found in Clostridioides difficile (Peptoclostridium difficile).